The sequence spans 236 residues: Growth-regulating factor 12 (236 aa).

Positions 1 to 27 are disordered; that stretch reads MLAEGRQVYLPPPPPSKLPRLSGTDPT. Positions 74 to 109 constitute a QLQ domain; the sequence is ALTFMQRQELEQQVLIYRYFAAGAPVPVHLVLPIWK. In terms of domain architecture, WRC spans 140-184; sequence EPEPGRCRRTDGKKWRCSRDVVPGHKYCERHVHRGRGRSRKPMEA. 2 short sequence motifs (bipartite nuclear localization signal) span residues 145–155 and 173–180; these read RCRRTDGKKWR and RGRGRSRK.

It belongs to the GRF family.

The protein localises to the nucleus. Functionally, transcription activator that plays a regulatory role in gibberellin-induced stem elongation. This Oryza sativa subsp. japonica (Rice) protein is Growth-regulating factor 12 (GRF12).